Consider the following 250-residue polypeptide: Doublesex- and mab-3-related transcription factor dmd-3 (250 aa).

Residues 19–68 constitute a DNA-binding region (DM 1); it reads CQRCLNHGLREKRKNHKLSCTFRFCQCSNCIMVERRRQLNSRLMQIDGSR. The span at 90–100 shows a compositional bias: polar residues; it reads CTSQSETTNES. The segment at 90 to 115 is disordered; sequence CTSQSETTNESSGEDKDDGKPKERRP. The span at 102–115 shows a compositional bias: basic and acidic residues; that stretch reads GEDKDDGKPKERRP. The DM 2 DNA-binding region spans 117–164; sequence CQRCAQHSVVNRLKGHKRACPFRDCFCAKCQVVVERQKLMADQIKLRR. Residues 166–201 are disordered; it reads QKREKNNLNSEREAPIAHSMTPSPIDTVTTTTTPTS. The segment covering 169–180 has biased composition (basic and acidic residues); sequence EKNNLNSEREAP. The segment covering 186 to 201 has biased composition (low complexity); it reads TPSPIDTVTTTTTPTS.

It belongs to the DMRT family. As to expression, in males, expressed in the tail tip. Specifically, expressed in 15 male-specific muscles of the tail tip called the diagonal muscles, and also in core body muscles of both males and hermaphrodites. In males, expressed in ray A-neurons. In males, expressed in PHC sensory neurons. In males, it is also expressed in the hindgut, B lineage and somatic gonad. In hermaphrodites, expressed in the anchor cell only.

The protein localises to the nucleus. The protein resides in the perikaryon. In terms of biological role, transcriptional activator which promotes male-specific development. Acts partially redundantly with the transcription factor mab-3 to coordinate tail tip cell fusion and retraction and thereby regulate male tail tip morphogenesis. This is most likely through the regulation of downstream effectors such as eff-1. May also negatively regulate the expression of other proteins implicated in male tail morphogenesis including nhr-25, vav-1 and arl-1 in tail tip cells. In males, plays a role in the development of ray A-neurons by negatively regulating the activity of the transcription factor ast-1. Plays a role in the male-specific differentiation of PHC sensory neurons into densely connected hub sensory neurons. Plays a role in male mating behavior. In Caenorhabditis elegans, this protein is Doublesex- and mab-3-related transcription factor dmd-3.